The primary structure comprises 625 residues: tRNA uridine 5-carboxymethylaminomethyl modification enzyme MnmG (625 aa).

FAD-binding positions include 9–14 (GGGHAG), V121, and S176. Residue 270-284 (GPRYCPSIEDKIYRF) participates in NAD(+) binding. Q367 serves as a coordination point for FAD.

Belongs to the MnmG family. As to quaternary structure, homodimer. Heterotetramer of two MnmE and two MnmG subunits. The cofactor is FAD.

The protein localises to the cytoplasm. Functionally, NAD-binding protein involved in the addition of a carboxymethylaminomethyl (cmnm) group at the wobble position (U34) of certain tRNAs, forming tRNA-cmnm(5)s(2)U34. The protein is tRNA uridine 5-carboxymethylaminomethyl modification enzyme MnmG of Nitratiruptor sp. (strain SB155-2).